A 393-amino-acid chain; its full sequence is Phosphoenolpyruvate/phosphate translocator 3, chloroplastic (393 aa).

Residues Met-1–Arg-65 constitute a chloroplast transit peptide. The next 7 membrane-spanning stretches (helical) occupy residues Leu-89 to Phe-109, Tyr-124 to Leu-144, Ala-164 to Val-183, Phe-195 to Leu-217, Leu-232 to Tyr-249, Ile-270 to Phe-290, and Thr-362 to Tyr-382. One can recognise an EamA domain in the interval Pro-123–Ser-228.

The protein belongs to the TPT transporter family. PPT (TC 2.A.7.9) subfamily.

The protein resides in the plastid. It is found in the chloroplast membrane. Its function is as follows. Phosphoenolpyruvate/phosphate translocator that transports phosphoenolpyruvate (PEP) and dihydroxyacetone phosphate. The sequence is that of Phosphoenolpyruvate/phosphate translocator 3, chloroplastic (PPT3) from Oryza sativa subsp. japonica (Rice).